Here is a 392-residue protein sequence, read N- to C-terminus: Succinyl-diaminopimelate desuccinylase (392 aa).

Histidine 71 provides a ligand contact to Zn(2+). Residue aspartate 73 is part of the active site. Residue aspartate 102 coordinates Zn(2+). Glutamate 144 functions as the Proton acceptor in the catalytic mechanism. Positions 145, 173, and 362 each coordinate Zn(2+).

It belongs to the peptidase M20A family. DapE subfamily. As to quaternary structure, homodimer. Zn(2+) serves as cofactor. Requires Co(2+) as cofactor.

It carries out the reaction N-succinyl-(2S,6S)-2,6-diaminopimelate + H2O = (2S,6S)-2,6-diaminopimelate + succinate. It functions in the pathway amino-acid biosynthesis; L-lysine biosynthesis via DAP pathway; LL-2,6-diaminopimelate from (S)-tetrahydrodipicolinate (succinylase route): step 3/3. Functionally, catalyzes the hydrolysis of N-succinyl-L,L-diaminopimelic acid (SDAP), forming succinate and LL-2,6-diaminopimelate (DAP), an intermediate involved in the bacterial biosynthesis of lysine and meso-diaminopimelic acid, an essential component of bacterial cell walls. This is Succinyl-diaminopimelate desuccinylase from Rhodospirillum rubrum (strain ATCC 11170 / ATH 1.1.1 / DSM 467 / LMG 4362 / NCIMB 8255 / S1).